The primary structure comprises 446 residues: Exodeoxyribonuclease 7 large subunit (446 aa).

This sequence belongs to the XseA family. In terms of assembly, heterooligomer composed of large and small subunits.

It is found in the cytoplasm. The catalysed reaction is Exonucleolytic cleavage in either 5'- to 3'- or 3'- to 5'-direction to yield nucleoside 5'-phosphates.. Functionally, bidirectionally degrades single-stranded DNA into large acid-insoluble oligonucleotides, which are then degraded further into small acid-soluble oligonucleotides. The chain is Exodeoxyribonuclease 7 large subunit from Streptococcus thermophilus (strain CNRZ 1066).